A 100-amino-acid polypeptide reads, in one-letter code: Elevenin (100 aa).

Residues 1 to 24 form the signal peptide; that stretch reads MALSQKALLVLVLSMLLTASDSWA. Cys-29 and Cys-38 are disulfide-bonded. Residues 44-100 constitute a propeptide that is removed on maturation; it reads KRGGDSLSVGGSAELDDTLTDPFLKSEEPKEWRELTRLSRVLQTFLSHPTGEMEQHD.

Belongs to the elevenin family. As to quaternary structure, monomer. In terms of tissue distribution, expressed by the venom duct.

It localises to the secreted. May mimic the function of prey elevenin neuropeptide. In vivo, intracranial injection in mice induces hyperactivity. The sequence is that of Elevenin from Conus ammiralis (Admiral cone).